The following is a 488-amino-acid chain: L-amino oxidase (488 aa).

Residues 60–61, 80–81, Arg88, and 104–107 each bind FAD; these read MS, EA, and GPMR. Residues Arg107 and Tyr388 each contribute to the substrate site. An intrachain disulfide couples Cys347 to Cys428. FAD-binding positions include Glu474 and 481-486; that span reads GWIDST. 481–482 serves as a coordination point for substrate; sequence GW.

The protein belongs to the flavin monoamine oxidase family. FIG1 subfamily. Monomer. This is in contrast with most of its orthologs, that are non-covalently linked homodimers. The cofactor is FAD. In terms of processing, N-glycosylated. As to expression, expressed by the venom gland.

The protein localises to the secreted. It catalyses the reaction an L-alpha-amino acid + O2 + H2O = a 2-oxocarboxylate + H2O2 + NH4(+). It carries out the reaction L-leucine + O2 + H2O = 4-methyl-2-oxopentanoate + H2O2 + NH4(+). Its function is as follows. Catalyzes an oxidative deamination of predominantly hydrophobic and aromatic L-amino acids, thus producing hydrogen peroxide that may contribute to the diverse toxic effects of this enzyme. Shows activity on L-Leu. Exhibits diverse biological activities, such as hemorrhage, hemolysis, edema, antibacterial and antiparasitic activities, as well as regulation of platelet aggregation. When tested on SW480 and SW620 human colon cancer cells, shows inhibition of cell proliferation, and induction of apoptosis, which is probably a consequence of the increased caspase-3 activity and the decreased Bcl-2 expression. This chain is L-amino oxidase, found in Trimeresurus purpureomaculatus (Mangrove pit viper).